A 479-amino-acid chain; its full sequence is Ammonium transporter Rh type C (479 aa).

The Cytoplasmic portion of the chain corresponds to 1-9 (MAWNTNLRW). A helical membrane pass occupies residues 10–30 (RLPLTCLLLQVIMVILFGVFV). Over 31–60 (RYDFEADAHWWSERTHKNLSDMENEFYYRY) the chain is Extracellular. Residue Asn48 is glycosylated (N-linked (GlcNAc...) asparagine). The helical transmembrane segment at 61–81 (PSFQDVHVMVFVGFGFLMTFL) threads the bilayer. At 82–85 (QRYG) the chain is on the cytoplasmic side. Residues 86-106 (FSAVGFNFLLAAFGIQWALLM) form a helical membrane-spanning segment. The Extracellular portion of the chain corresponds to 107 to 123 (QGWFHFLQDRYIVVGVE). A helical transmembrane segment spans residues 124-144 (NLINADFCVASVCVAFGAVLG). At 145 to 148 (KVSP) the chain is on the cytoplasmic side. A helical transmembrane segment spans residues 149-169 (IQLLIMTFFQVTLFAVNEFIL). Residues 170–177 (LNLLKVKD) are Extracellular-facing. The helical transmembrane segment at 178–200 (AGGSMTIHTFGAYFGLTVTRILY) threads the bilayer. Over 201–218 (RRNLEQSKERQNSVYQSD) the chain is Cytoplasmic. Residues 219–239 (LFAMIGTLFLWMYWPSFNSAI) traverse the membrane as a helical segment. The Extracellular portion of the chain corresponds to 240–250 (SYHGDSQHRAA). A helical membrane pass occupies residues 251-271 (INTYCSLAACVLTSVAISSAL). Over 272–281 (HKKGKLDMVH) the chain is Cytoplasmic. The chain crosses the membrane as a helical span at residues 282-302 (IQNATLAGGVAVGTAAEMMLM). Pro303 is a topological domain (extracellular). A helical transmembrane segment spans residues 304-324 (YGALIIGFVCGIISTLGFVYL). Over 325–345 (TPFLESRLHIQDTCGINNLHG) the chain is Cytoplasmic. A helical membrane pass occupies residues 346-366 (IPGIIGGIVGAVTAASASLEV). Residues 367–394 (YGKEGLVHSFDFQGFNGDWTARTQGKFQ) are Extracellular-facing. The helical transmembrane segment at 395 to 415 (IYGLLVTLAMALMGGIIVGLI) threads the bilayer. Over 416–479 (LRLPFWGQPS…PMASSVPLVP (64 aa)) the chain is Cytoplasmic.

Belongs to the ammonium transporter (TC 2.A.49) family. Rh subfamily. As to quaternary structure, homotrimer. Post-translationally, N-glycosylated. As to expression, expressed in brain, testis, placenta, pancreas, esophagus and prostate. Expressed in squamous epithelial tissues (at protein level). Expressed in kidney.

It is found in the cell membrane. The protein resides in the apical cell membrane. The catalysed reaction is NH4(+)(in) = NH4(+)(out). The enzyme catalyses methylamine(out) = methylamine(in). It carries out the reaction CO2(out) = CO2(in). Its function is as follows. Ammonium transporter involved in the maintenance of acid-base homeostasis. Transports ammonium and its related derivative methylammonium across the plasma membrane of epithelial cells likely contributing to renal transepithelial ammonia transport and ammonia metabolism. Postulated to primarily mediate an electroneutral bidirectional transport of NH3 ammonia species according to a mechanism that implies interaction of an NH4(+) ion with acidic residues of the pore entry followed by dissociation of NH4(+) into NH3 and H(+). As a result NH3 transits through the central pore and is protonated on the extracellular side reforming NH4(+). May act as a CO2 channel providing for renal acid secretion. This is Ammonium transporter Rh type C (RHCG) from Homo sapiens (Human).